A 311-amino-acid chain; its full sequence is Aurora kinase (311 aa).

Positions Phe20–Leu300 constitute a Protein kinase domain. Residue Lys49 participates in ATP binding. Catalysis depends on Asp143, which acts as the Proton acceptor. The tract at residues Asp189–Glu216 is activation loop. Thr205 carries the phosphothreonine; by autocatalysis modification. The Destruction (D)-box signature appears at Met280–Phe299.

The protein belongs to the protein kinase superfamily. Ser/Thr protein kinase family. Aurora subfamily. Interacts with EB1 (via C-terminal residues 101-238). Post-translationally, phosphorylated in mitosis and cytokinesis. Activated by autophosphorylation at Thr-205.

It localises to the nucleus. The protein localises to the cytoplasm. The protein resides in the cytoskeleton. Its subcellular location is the microtubule organizing center. It is found in the centrosome. It localises to the spindle. The protein localises to the spindle pole. The protein resides in the nucleus membrane. The enzyme catalyses L-seryl-[protein] + ATP = O-phospho-L-seryl-[protein] + ADP + H(+). It carries out the reaction L-threonyl-[protein] + ATP = O-phospho-L-threonyl-[protein] + ADP + H(+). Its activity is regulated as follows. Activated by cell-cycle phase specific phosphorylation. Inhibited by ATP-competitive inhibitors N-[4-[[6-Methoxy-7-[3-(4-morpholinyl)propoxy]-4-quinazolinyl]amino]phenyl]benzamide (ZM447439) and cyclopropanecarboxylic acid-(3-(4-(3-trifluoromethylphenylamino)-pyrimidin-2-ylamino)-phenyl)-amide (CFPPA). Inhibition leads to reduced growth, increased cytokinesis, microtubular defects, and increased ploidy of the cells. In terms of biological role, involved in regulation of the cell cycle. Required for mitotic cell division and cytokinesis. Based on its localization to centrosomes and spindle microtubules, as well as to various cytoskeletal components such as the median body, parental attachment disk, and anterior and posterior-lateral paraflagellar dense rods, may coordinate reorganization and segregation of tubulin-containing structures during mitosis and cytokinesis. May regulate microtubule disassembly by phosphorylating cytoskeletal proteins leading to their destabilization. Phosphorylates EB1 at 'Ser-148' in vitro. Phosphorylates histone H3 in vitro. In Giardia intestinalis (strain ATCC 50803 / WB clone C6) (Giardia lamblia), this protein is Aurora kinase.